The sequence spans 181 residues: Putative D-tyrosyl-tRNA(Tyr) deacylase 2 (181 aa).

Belongs to the DTD family. Highly divergent. Homodimer.

It is found in the cytoplasm. Its function is as follows. May hydrolyze D-tyrosyl-tRNA(Tyr) into D-tyrosine and free tRNA(Tyr). Could be a defense mechanism against a harmful effect of D-tyrosine. The sequence is that of Putative D-tyrosyl-tRNA(Tyr) deacylase 2 from Leishmania major.